The chain runs to 547 residues: DNA polymerase kappa (547 aa).

The tract at residues 18 to 39 (LTIEDDGSSSSDEEATLKRRLA) is disordered. Residues 20-31 (IEDDGSSSSDEE) are compositionally biased toward acidic residues. The region spanning 132–316 (IVHVDCDAFY…LPVREVSGIG (185 aa)) is the UmuC domain. Mg(2+)-binding residues include Asp-136 and Asp-226. Residues 489 to 518 (TVPCPVCQKNIENELGILNQHVDLCLNVET) form a UBZ4-type zinc finger. Zn(2+) is bound by residues Cys-492, Cys-495, His-509, and Cys-513.

In terms of assembly, interacts with hus1 and rad17.

It is found in the cytoplasm. The protein resides in the nucleus. It carries out the reaction DNA(n) + a 2'-deoxyribonucleoside 5'-triphosphate = DNA(n+1) + diphosphate. In terms of biological role, DNA polymerase specifically involved in DNA repair. Plays an important role in translesion synthesis, where the normal high-fidelity DNA polymerases cannot proceed and DNA synthesis stalls. Has a role in meiosis. The sequence is that of DNA polymerase kappa (mug40) from Schizosaccharomyces pombe (strain 972 / ATCC 24843) (Fission yeast).